The chain runs to 1969 residues: TP53-binding protein 1 (1969 aa).

The tract at residues 1–24 (MPGEQMDPTGSQLDSDFSQQDTPC) is disordered. Residues 8–22 (PTGSQLDSDFSQQDT) show a composition bias toward polar residues. Residues serine 30, serine 68, and serine 73 each carry the phosphoserine modification. Positions 67–168 (VSNPEQSAVE…DSLAAEDSAS (102 aa)) are disordered. A compositionally biased stretch (polar residues) spans 69-85 (NPEQSAVEQGDSNSSFN). Basic and acidic residues predominate over residues 86-95 (EHLKEKKASD). Residues 101–110 (HLGTSGSISQ) show a composition bias toward polar residues. At serine 109 the chain carries Phosphoserine. A compositionally biased stretch (acidic residues) spans 135–148 (PEEEKEEEELEEEK). Positions 158-168 (ADSLAAEDSAS) are enriched in low complexity. A phosphoserine mark is found at serine 169, serine 179, and serine 181. Lysine 220 is covalently cross-linked (Glycyl lysine isopeptide (Lys-Gly) (interchain with G-Cter in SUMO1); alternate). Lysine 220 is covalently cross-linked (Glycyl lysine isopeptide (Lys-Gly) (interchain with G-Cter in SUMO2); alternate). 3 disordered regions span residues 254-337 (EQNL…VSTP), 352-599 (LVQE…CKGR), and 614-707 (DSGS…CPEA). Phosphoserine occurs at positions 267 and 268. Residues 277 to 288 (ETKEQVPARELL) are compositionally biased toward basic and acidic residues. A compositionally biased stretch (polar residues) spans 294–324 (VQPSSEPEVSSTQEDLFDQSSKTASDGCSTP). The residue at position 297 (serine 297) is a Phosphoserine. Phosphothreonine is present on threonine 305. A phosphoserine mark is found at serine 368, serine 382, and serine 397. Positions 407-419 (QKLHDDEAMETEK) are enriched in basic and acidic residues. Over residues 426-442 (PAVSPQASTPVSRSTPV) the composition is skewed to polar residues. A phosphoserine mark is found at serine 429, serine 452, and serine 464. Residues 481-490 (HSSSLTVECS) are compositionally biased toward polar residues. Residues 491 to 501 (KTSESEPKNFT) are compositionally biased toward basic and acidic residues. Residues serine 507, serine 518, serine 523, and serine 525 each carry the phosphoserine modification. Positions 517 to 528 (LSTSEYSQSSKM) are enriched in polar residues. 2 positions are modified to phosphothreonine: threonine 543 and threonine 548. A phosphoserine mark is found at serine 552 and serine 579. Residues 566–582 (VLVTPSQDDQVEMSQNV) are compositionally biased toward polar residues. Residues 583–599 (DKAKEDETEDRGDCKGR) are compositionally biased toward basic and acidic residues. Residues 614–634 (DSGSQAVPSPATRSEALSSVL) show a composition bias toward polar residues. Serine 622, serine 627, serine 631, and serine 632 each carry phosphoserine. A compositionally biased stretch (basic and acidic residues) spans 640–649 (MDTKEHHPEE). Phosphothreonine is present on threonine 662. Positions 666–675 (SHREEPKEEP) are enriched in basic and acidic residues. Serine 684, serine 716, serine 719, and serine 763 each carry phosphoserine. A disordered region spans residues 754 to 870 (KEPSPRADVS…DDKQLGPEGA (117 aa)). Over residues 790-818 (AENRLDTPEEKRIECDGDSKAETTEKDAV) the composition is skewed to basic and acidic residues. Serine 822 bears the Phosphoserine mark. Positions 830–839 (VRDEPVRPDQ) are enriched in basic and acidic residues. Position 912 is a phosphothreonine (threonine 912). Residue lysine 920 forms a Glycyl lysine isopeptide (Lys-Gly) (interchain with G-Cter in SUMO2) linkage. Positions 927–1017 (STPIGISNYP…GSTAIAEPVA (91 aa)) are disordered. A compositionally biased stretch (polar residues) spans 935 to 949 (YPESTIATSDVTSES). Positions 961 to 975 (EKGDSESAPEMDGKL) are enriched in basic and acidic residues. Serine 965 is modified (phosphoserine). Lysine 974 participates in a covalent cross-link: Glycyl lysine isopeptide (Lys-Gly) (interchain with G-Cter in SUMO2). Serine 1018 carries the phosphoserine modification. Disordered stretches follow at residues 1034–1144 (QEKE…MDRP), 1178–1231 (GTST…PHGH), and 1267–1478 (TEET…DSSS). Positions 1060–1074 (EEDKERPDVTPKLRQ) are enriched in basic and acidic residues. 2 positions are modified to phosphoserine: serine 1075 and serine 1096. The segment covering 1099–1112 (SQQRASQEQRASQE) has biased composition (low complexity). Serine 1115 carries the phosphoserine modification. A compositionally biased stretch (polar residues) spans 1178–1197 (GTSTAEQNSGKQDATVQTER). The residue at position 1211 (threonine 1211) is a Phosphothreonine. A phosphoserine mark is found at serine 1213 and serine 1216. Acidic residues predominate over residues 1269–1282 (ETEEPIVECQECET). Residues 1295–1326 (DLGDISSFSSKASSSHHTSSGTSLSAIHSSGS) are compositionally biased toward low complexity. Serine 1314 bears the Phosphoserine mark. Arginine 1329 carries the post-translational modification Omega-N-methylarginine. Serine 1339 is subject to Phosphoserine. Arginine 1352 carries the post-translational modification Omega-N-methylarginine. Serine 1359 bears the Phosphoserine mark. Residue lysine 1362 forms a Glycyl lysine isopeptide (Lys-Gly) (interchain with G-Cter in SUMO2) linkage. Phosphoserine is present on serine 1365. Positions 1393-1400 (RGRGRRGR) match the GAR motif. A phosphoserine mark is found at serine 1423 and serine 1427. Lysine 1431 participates in a covalent cross-link: Glycyl lysine isopeptide (Lys-Gly) (interchain with G-Cter in SUMO1); alternate. Lysine 1431 participates in a covalent cross-link: Glycyl lysine isopeptide (Lys-Gly) (interchain with G-Cter in SUMO2); alternate. Phosphoserine is present on residues serine 1457, serine 1459, serine 1470, and serine 1471. Over residues 1469-1478 (GSSDGLDSSS) the composition is skewed to low complexity. Residues 1481–1600 (NSFVGLRVVA…NRLREQYGLG (120 aa)) form a tudor-like region. Residues 1492 to 1520 (WSSNGYFYSGKITRDVGAGKYKLLFDDGY) are interaction with dimethylated histone H4. Lysine 1560 is covalently cross-linked (Glycyl lysine isopeptide (Lys-Gly) (interchain with G-Cter in SUMO1); alternate). Residue lysine 1560 forms a Glycyl lysine isopeptide (Lys-Gly) (interchain with G-Cter in SUMO2); alternate linkage. The short motif at 1601-1628 (PYEAVTPLTKAADISLDNLVEGKRKRRS) is the UDR element. A Phosphothreonine modification is found at threonine 1606. A phosphoserine mark is found at serine 1615, serine 1628, and serine 1632. The segment at 1624-1715 (RKRRSNISSP…IGEPSVLEEP (92 aa)) is disordered. A compositionally biased stretch (low complexity) spans 1631–1648 (SSPVTPTAASSSSTTPTR). Residues threonine 1635 and threonine 1645 each carry the phosphothreonine modification. Phosphoserine occurs at positions 1653, 1670, and 1675. Residue lysine 1682 forms a Glycyl lysine isopeptide (Lys-Gly) (interchain with G-Cter in ubiquitin) linkage. Phosphoserine occurs at positions 1698 and 1756. BRCT domains are found at residues 1749 to 1845 (LDGP…NYLL) and 1861 to 1961 (PREN…QHPK).

In terms of assembly, homoligomer. Interacts with p53/TP53 (via the central domain). Interacts with DCLRE1C. Interacts with histone H2AX and this requires phosphorylation of H2AX on 'Ser-139'. Interacts with histone H4 that has been dimethylated at 'Lys-20' (H4K20me2). Has low affinity for histone H4 containing monomethylated 'Lys-20' (H4K20me1). Does not bind histone H4 containing unmethylated or trimethylated 'Lys-20' (H4K20me3). Has low affinity for histone H3 that has been dimethylated on 'Lys-79'. Has very low affinity for histone H3 that has been monomethylated on 'Lys-79' (in vitro). Does not bind unmethylated histone H3. Interacts with histone H2A monoubiquitinated at 'Lys-15' (H2AK15Ub). Interacts with PWWP3A/EXPAND1. Interacts with CHEK2; modulates CHEK2 phosphorylation at 'Thr-68' in response to infrared. Interacts with MSL1; this interaction may be required for MSL1 DNA repair activity, but not for histone acetyltransferase activity. Interacts (when phosphorylated by ATM) with RIF1. Interacts (via the Tudor-like domain) with NUDT16L1/TIRR; interaction masks the Tudor-like domain and prevents recruitment to chromatin. Interacts with PAXIP1. Interacts with IFI202A. Interacts with SHLD2. Interacts (when phosphorylated) with TOPBP1. Interacts with GFI1; promoting methylation by PRMT1. Interacts with (phosphorylated) DYNLL1; specifically binds DYNLL1 phosphorylated at 'Ser-88' and promotes its recruitment to double stand breaks (DSBs). Post-translationally, phosphorylated at basal level in the absence of DNA damage. Phosphorylated by ATM in response to DNA damage: phosphorylation at different sites promotes interaction with different set of proteins: phosphorylation at the N-terminus by ATM (residues from 11-181) promotes interaction with PAXIP1 and non-homologous end joining (NHEJ) of dysfunctional telomeres. Phosphorylation by ATM at residues that are located more C-terminus (residues 300-650) leads to promote interaction with RIF1. Interaction with RIF1 leads to disrupt interaction with NUDT16L1/TIRR. Phosphorylation at Thr-1606 and Ser-1615 in the UDR motif blocks interaction with H2AK15ub. Dephosphorylated by PPP4C. Hyperphosphorylation during mitosis correlates with its exclusion from chromatin and DNA lesions. Hyperphosphorylated in an ATR-dependent manner in response to DNA damage induced by UV irradiation. Dephosphorylated by PPP5C. Phosphorylation at Ser-368 and Thr-662 promotes interaction with TOPBP1. Phosphorylated by VRK1. Asymmetrically dimethylated on Arg residues by PRMT1. Methylation is required for DNA binding. In terms of processing, monoubiquitinated at Lys-1682 by MSL2 is reponse to DNA damage, leading to its stabilization.

Its subcellular location is the nucleus. It localises to the chromosome. It is found in the centromere. The protein localises to the kinetochore. Its function is as follows. Double-strand break (DSB) repair protein involved in response to DNA damage, telomere dynamics and class-switch recombination (CSR) during antibody genesis. Plays a key role in the repair of double-strand DNA breaks (DSBs) in response to DNA damage by promoting non-homologous end joining (NHEJ)-mediated repair of DSBs and specifically counteracting the function of the homologous recombination (HR) repair protein BRCA1. In response to DSBs, phosphorylation by ATM promotes interaction with RIF1 and dissociation from NUDT16L1/TIRR, leading to recruitment to DSBs sites. Recruited to DSBs sites by recognizing and binding histone H2A monoubiquitinated at 'Lys-15' (H2AK15Ub) and histone H4 dimethylated at 'Lys-20' (H4K20me2), two histone marks that are present at DSBs sites. Required for immunoglobulin class-switch recombination (CSR) during antibody genesis, a process that involves the generation of DNA DSBs. Participates in the repair and the orientation of the broken DNA ends during CSR. In contrast, it is not required for classic NHEJ and V(D)J recombination. Promotes NHEJ of dysfunctional telomeres. This chain is TP53-binding protein 1, found in Mus musculus (Mouse).